A 509-amino-acid polypeptide reads, in one-letter code: MEEIQRYFQLERSHQHDFLYPLIFQEYIYTFAHDRGCNRSILSENPCYENKSSLLIVKRLITRMCQQNHFLISSNDFNQNPFWGRNKNFDFQIISEGFALIVEIPFSLRLRASLEEKKIVTFQNLRSIQAIFPFLEDSFSHLNFVLDISIPHSIHLEILVQTLRYWVKDASSLHLLRFFLNEYCNSNSLITPKKVSSSFSKRNQRFFLFLYNSHVCEYESIFVFLRKQSSHLRSTSSGLLLERIYFYAKMERLVNLFVKVKDFQVNLWLVKEPCMHYVRYQRKSILASKGVSLLINKWKSYLVAFWQWHFSMWFHPRRISINQLSNHSLEFLGYLSSVRMNPSVVRSQILENSFLINNALKKFDTLVPINPLIASLAKAKFCNVLGHPISKPVWADFSDLNIIDRFGHISRNISHYYSGSSXKNSLYRIKYILRLSCARTLARKHKSTVRVFLKRLGSELLEEFLMSEEDVLSLTFPKASSTFWGVYRSRIWYLDIISINDLANHKSKF.

Belongs to the intron maturase 2 family. MatK subfamily.

The protein resides in the plastid. It is found in the chloroplast. In terms of biological role, usually encoded in the trnK tRNA gene intron. Probably assists in splicing its own and other chloroplast group II introns. The sequence is that of Maturase K from Otacanthus azureus (Brazilian snapdragon).